Reading from the N-terminus, the 270-residue chain is uncharacterized protein (270 aa).

Residue 30–55 (ATGSLGRVAARALADAGARLTLAGGN) coordinates NADP(+). A substrate-binding site is contributed by S157. Catalysis depends on Y171, which acts as the Proton acceptor.

It belongs to the short-chain dehydrogenases/reductases (SDR) family.

This is an uncharacterized protein from Mycobacterium tuberculosis (strain CDC 1551 / Oshkosh).